We begin with the raw amino-acid sequence, 233 residues long: Large ribosomal subunit protein uL1 (233 aa).

This sequence belongs to the universal ribosomal protein uL1 family. As to quaternary structure, part of the 50S ribosomal subunit.

Functionally, binds directly to 23S rRNA. The L1 stalk is quite mobile in the ribosome, and is involved in E site tRNA release. Protein L1 is also a translational repressor protein, it controls the translation of the L11 operon by binding to its mRNA. This Brucella canis (strain ATCC 23365 / NCTC 10854 / RM-666) protein is Large ribosomal subunit protein uL1.